The primary structure comprises 297 residues: UDP-N-acetylenolpyruvoylglucosamine reductase (297 aa).

The 166-residue stretch at 27-192 folds into the FAD-binding PCMH-type domain; it reads IGGPADALLE…LRAAYRLHPG (166 aa). Arginine 170 is a catalytic residue. The Proton donor role is filled by serine 220. Residue glutamate 290 is part of the active site.

The protein belongs to the MurB family. It depends on FAD as a cofactor.

Its subcellular location is the cytoplasm. The enzyme catalyses UDP-N-acetyl-alpha-D-muramate + NADP(+) = UDP-N-acetyl-3-O-(1-carboxyvinyl)-alpha-D-glucosamine + NADPH + H(+). The protein operates within cell wall biogenesis; peptidoglycan biosynthesis. Cell wall formation. This Rubrobacter xylanophilus (strain DSM 9941 / JCM 11954 / NBRC 16129 / PRD-1) protein is UDP-N-acetylenolpyruvoylglucosamine reductase.